The following is a 278-amino-acid chain: Large ribosomal subunit protein uL2 (278 aa).

3 disordered regions span residues 1-20 (MAIR…SVSD), 25-57 (TRST…RGGG), and 224-278 (VVMN…GKKR). Basic residues-rich tracts occupy residues 45-57 (AHGR…RGGG) and 269-278 (VRRRKTGKKR).

Belongs to the universal ribosomal protein uL2 family. Part of the 50S ribosomal subunit. Forms a bridge to the 30S subunit in the 70S ribosome.

Its function is as follows. One of the primary rRNA binding proteins. Required for association of the 30S and 50S subunits to form the 70S ribosome, for tRNA binding and peptide bond formation. It has been suggested to have peptidyltransferase activity; this is somewhat controversial. Makes several contacts with the 16S rRNA in the 70S ribosome. This chain is Large ribosomal subunit protein uL2, found in Nocardia farcinica (strain IFM 10152).